Reading from the N-terminus, the 589-residue chain is Pentalenolactone D synthase (589 aa).

FAD-binding positions include 60–61 (IG), 82–83 (DE), 90–91 (TW), 102–103 (DV), Tyr108, Val152, and Met491.

This sequence belongs to the FAD-binding monooxygenase family. FAD serves as cofactor.

The catalysed reaction is 1-deoxy-11-oxopentalenate + NADPH + O2 + H(+) = pentalenolactone D + NADP(+) + H2O. Its pathway is antibiotic biosynthesis; pentalenolactone biosynthesis. Functionally, catalyzes the flavin-dependent Baeyer-Villiger oxidation of 1-deoxy-11-oxopentalenic acid to pentalenolactone D in the biosynthesis of pentalenolactone antibiotic. In Streptomyces arenae, this protein is Pentalenolactone D synthase (pntE).